The primary structure comprises 260 residues: MSLNTTFTKEDGTEVVIPFNGSQNGHPENEEPEVEEAAEPSSSVETLCGATRGDIIVMKHTTKALTELIERLLHSDEFEVRRCSNGQIISQGRCNGTTPGNGIGGGGASSEELEKALKDRDAARAEADKLHANYATLFASFNTVREAANDIRGEYEDARDKLKLAAAEVDEWQAKFLAVKDNANSELERASVEYDDLLRSHDENTKGLRLRVKRQEIELSSKNDEIKVLTNRVSELSQICDQLLNDVDVSDGMSVISTDA.

Positions 1–43 (MSLNTTFTKEDGTEVVIPFNGSQNGHPENEEPEVEEAAEPSSS) are disordered. The stretch at 108–249 (ASSEELEKAL…CDQLLNDVDV (142 aa)) forms a coiled coil.

This sequence belongs to the TACC family. In terms of assembly, interacts with zyg-9 to form a heterodimer. Interacts with zyg-8 to form a heterodimer. Interacts with efa-6 (via N-terminus). In terms of tissue distribution, expressed in touch neurons.

The protein localises to the cytoplasm. Its subcellular location is the cytoskeleton. The protein resides in the spindle pole. It is found in the microtubule organizing center. It localises to the centrosome. The protein localises to the chromosome. Its subcellular location is the centromere. The protein resides in the kinetochore. It is found in the cell projection. It localises to the axon. The protein localises to the perikaryon. Its function is as follows. Involved in microtubule formation, polymerization and assembly, regulating microtubule nucleation and length. Plays a role in pronuclear migration and mitotic and meiotic spindle elongation during early embryogenesis. In complex with zyg-9, functions during the early stages of embryonic development to regulate microtubule assembly throughout the cell cycle. Specifically, the complex is required for the formation and growth of astral microtubules and spindle microtubules during mitotic spindle assembly. At anaphase, the complex is required for mitotic spindle positioning in one-cell stage embryos. The complex acts in a partially redundant manner with the tac-1/zyg-8 complex to regulate microtubule assembly and processes during interphase, mitosis and meiosis in embryos. Plays a role in injury-induced axonal regrowth, regeneration and microtubule stability in PLM neurons and this may be downstream of efa-6. The polypeptide is Transforming acid coiled-coil-containing protein 1 (Caenorhabditis elegans).